We begin with the raw amino-acid sequence, 192 residues long: MGLEVVVDEIKAKGDREAAAIKAAAEAQAKEIVNEANLRANEIRLAAEKDADTQADRIMIREVASANLVVKRDFLNAQKELLDKVYTSAAEEIANLPADVHAKAVRELLKESAKQIKAGVVFTNARDEKAAKEAISGLKTLSGFTFGGITDIAGGVVVQSTDGQLTLDFSYQTFMGEVWETSLKDASEILFG.

Belongs to the V-ATPase E subunit family. Has multiple subunits with at least A(3), B(3), C, D, E, F, H, I and proteolipid K(x).

The protein resides in the cell membrane. Functionally, component of the A-type ATP synthase that produces ATP from ADP in the presence of a proton gradient across the membrane. This chain is A-type ATP synthase subunit E, found in Methanocorpusculum labreanum (strain ATCC 43576 / DSM 4855 / Z).